A 184-amino-acid chain; its full sequence is MSTFEDADTEETVTCLQMTIYHPGQQSGIFKSIRFCSKEKFPSIEVVKFGRNSNMCQYTFQDKQVSRIQFVLQPFKQFNSSVLSFEIKNMSKKTSLMVDNQELGYLNKMDLPYKCMLRFGEYQFLLQKEDGESVESFETQFIMSSRPLLQENNWPTQNPIPEDGMYSSYFTHRSSPSEMDENEL.

Threonine 9 bears the Phosphothreonine mark. The 57-residue stretch at valine 47–leucine 103 folds into the FHA domain. Positions asparagine 152–leucine 184 are disordered. The span at serine 168–serine 177 shows a compositional bias: polar residues.

It belongs to the TIFA family. Homooligomer; homooligomerizes following phosphorylation at Thr-9. Interacts with IRAK1, TRAF2 and TRAF6. Interacts with TIFAB; binding to TIFAB inhibits TRAF6 activation, possibly by inducing a conformational change in TIFA. Interacts with ZCCHC11; binding to ZCCHC11 suppresses the TRAF6-dependent activation of NF-kappa-B. In terms of processing, phosphorylated at Thr-9 following detection of ADP-D-glycero-beta-D-manno-heptose (ADP-Heptose) by ALPK1. Phosphorylation at Thr-9 by ALPK1 leads to the formation of an intermolecular binding between the FHA domain and phosphorylated Thr-9, promoting TIFA oligomerization and TIFA-mediated NF-kappa-B activation. In terms of tissue distribution, highly expressed in the spleen and at lower levels in heart, brain, lung, liver, kidney and testes.

The protein localises to the cytoplasm. Functionally, adapter molecule that plays a key role in the activation of pro-inflammatory NF-kappa-B signaling following detection of bacterial pathogen-associated molecular pattern metabolites (PAMPs). Promotes activation of an innate immune response by inducing the oligomerization and polyubiquitination of TRAF6, which leads to the activation of TAK1 and IKK through a proteasome-independent mechanism. TIFA-dependent innate immune response is triggered by ADP-D-glycero-beta-D-manno-heptose (ADP-Heptose), a potent PAMP present in all Gram-negative and some Gram-positive bacteria: ADP-Heptose is recognized by ALPK1, which phosphorylates TIFA at Thr-9, leading to TIFA homooligomerization and subsequent activation of pro-inflammatory NF-kappa-B signaling. The sequence is that of TRAF-interacting protein with FHA domain-containing protein A from Mus musculus (Mouse).